Consider the following 88-residue polypeptide: Small ribosomal subunit protein bS16c (88 aa).

The protein belongs to the bacterial ribosomal protein bS16 family.

The protein resides in the plastid. The protein localises to the chloroplast. This chain is Small ribosomal subunit protein bS16c, found in Citrus sinensis (Sweet orange).